The sequence spans 174 residues: MQGIDVSYSDEVGFLTKGDRDWEDWIMQLLLMAKKEIGKDNAQEMSINFVDEDRSQAINRDYRDKDRPTDVISFAIEDGDDGLDLSMFTQDPDFTEDIGDLFMCPSVIERHSKEYGTGFDREFGYTIVHGYLHLNCYDHIEPDEAKEMFGIQGKVLEEYGLPLYPDQLDEGRGK.

Residues histidine 129, histidine 133, and histidine 139 each coordinate Zn(2+).

It belongs to the endoribonuclease YbeY family. The cofactor is Zn(2+).

The protein resides in the cytoplasm. In terms of biological role, single strand-specific metallo-endoribonuclease involved in late-stage 70S ribosome quality control and in maturation of the 3' terminus of the 16S rRNA. This is Endoribonuclease YbeY from Lactobacillus delbrueckii subsp. bulgaricus (strain ATCC 11842 / DSM 20081 / BCRC 10696 / JCM 1002 / NBRC 13953 / NCIMB 11778 / NCTC 12712 / WDCM 00102 / Lb 14).